Consider the following 354-residue polypeptide: N-acetyl-gamma-glutamyl-phosphate reductase (354 aa).

Cys-156 is a catalytic residue.

It belongs to the NAGSA dehydrogenase family. Type 1 subfamily.

It is found in the cytoplasm. It carries out the reaction N-acetyl-L-glutamate 5-semialdehyde + phosphate + NADP(+) = N-acetyl-L-glutamyl 5-phosphate + NADPH + H(+). It functions in the pathway amino-acid biosynthesis; L-arginine biosynthesis; N(2)-acetyl-L-ornithine from L-glutamate: step 3/4. Catalyzes the NADPH-dependent reduction of N-acetyl-5-glutamyl phosphate to yield N-acetyl-L-glutamate 5-semialdehyde. The protein is N-acetyl-gamma-glutamyl-phosphate reductase of Bordetella pertussis (strain Tohama I / ATCC BAA-589 / NCTC 13251).